A 276-amino-acid chain; its full sequence is MALVKTKPTSPGRRSMVKVVNKDLHKGTPYAPLLEKQFQKSGRNNNGHITTRHKGGGHKHHYRVVDFKRNDKDGIPAKVERLEYDPNRSANIALVVFADGERRYIIATKGMVAGQQLLNGSEAPIKAGNNLPIRNIPVGTTINNVEMLPGKGAQIARAAGGSAVLLAREGLYAQVRLRSGEVRRVHIECRATVGEVGNEEHSLRVIGKAGATRWRGIRPTVRGVVMNPVDHPHGGGEGKTAAGRDPVSPWGTPTKGYRTRSNKRTDSMIVQKRHKR.

Residues 225-276 form a disordered region; sequence VMNPVDHPHGGGEGKTAAGRDPVSPWGTPTKGYRTRSNKRTDSMIVQKRHKR.

The protein belongs to the universal ribosomal protein uL2 family. As to quaternary structure, part of the 50S ribosomal subunit. Forms a bridge to the 30S subunit in the 70S ribosome.

Functionally, one of the primary rRNA binding proteins. Required for association of the 30S and 50S subunits to form the 70S ribosome, for tRNA binding and peptide bond formation. It has been suggested to have peptidyltransferase activity; this is somewhat controversial. Makes several contacts with the 16S rRNA in the 70S ribosome. The protein is Large ribosomal subunit protein uL2 of Cupriavidus taiwanensis (strain DSM 17343 / BCRC 17206 / CCUG 44338 / CIP 107171 / LMG 19424 / R1) (Ralstonia taiwanensis (strain LMG 19424)).